The sequence spans 574 residues: Streptolysin O (574 aa).

The signal sequence occupies residues 1–36 (MKDMSNKKIFKKYSRVAGLLTAALIVGNLVTANADS). Positions 37-52 (NKQNTANTETTTTNEQ) are enriched in low complexity. 2 disordered regions span residues 37-64 (NKQNTANTETTTTNEQPKPESSELTTEK) and 84-111 (KEMPLESAEKEEKKSEDNKKSEEDHTEE). Basic and acidic residues predominate over residues 53–64 (PKPESSELTTEK). The next 4 beta stranded transmembrane spans lie at 263–276 (KSQIEAALNVNSKI), 283–292 (IDFKSISKGE), 361–370 (SNDVEAAFSA), and 378–390 (KTNGKYSDILENS). The Conserved undecapeptide motif lies at 532 to 542 (ECTGLAWEWWR). The short motif at 564 to 565 (TL) is the Cholesterol binding element.

Belongs to the cholesterol-dependent cytolysin family. As to quaternary structure, homooligomeric pore complex of 35 to 50 subunits; when inserted in the host membrane.

It is found in the secreted. The protein localises to the host cell membrane. Functionally, a cholesterol-dependent toxin that causes cytolysis by forming pores in cholesterol containing host membranes. After binding to target membranes, the protein undergoes a major conformation change, leading to its insertion in the host membrane and formation of an oligomeric pore complex. Cholesterol is required for binding to host membranes, membrane insertion and pore formation; cholesterol binding is mediated by a Thr-Leu pair in the C-terminus. Can be reversibly inactivated by oxidation. The chain is Streptolysin O (slo) from Streptococcus dysgalactiae subsp. equisimilis (Streptococcus equisimilis).